The following is a 138-amino-acid chain: MISYQTEGVKMPDIKKKETTGWIKEVAACYGKRVGEIAYIFCSDDKILEVNRQYLQHDYYTDIITFDYCEGDRISGDLFISLDTVRSNAEQFEQPYDRELHRVIIHGILHLCGINDKGPGEREIMEAAENKALALISL.

Histidine 106, histidine 110, and aspartate 116 together coordinate Zn(2+).

This sequence belongs to the endoribonuclease YbeY family. It depends on Zn(2+) as a cofactor.

The protein resides in the cytoplasm. Single strand-specific metallo-endoribonuclease involved in late-stage 70S ribosome quality control and in maturation of the 3' terminus of the 16S rRNA. The chain is Endoribonuclease YbeY from Phocaeicola vulgatus (strain ATCC 8482 / DSM 1447 / JCM 5826 / CCUG 4940 / NBRC 14291 / NCTC 11154) (Bacteroides vulgatus).